The primary structure comprises 322 residues: Phosphoenolpyruvate transferase (322 aa).

Asp58 lines the 7,8-didemethyl-8-hydroxy-5-deazariboflavin pocket.

Belongs to the CofD family. Homodimer. Requires Mg(2+) as cofactor.

The catalysed reaction is enolpyruvoyl-2-diphospho-5'-guanosine + 7,8-didemethyl-8-hydroxy-5-deazariboflavin = dehydro coenzyme F420-0 + GMP + H(+). The protein operates within cofactor biosynthesis; coenzyme F420 biosynthesis. Its function is as follows. Catalyzes the transfer of the phosphoenolpyruvate moiety from enoylpyruvoyl-2-diphospho-5'-guanosine (EPPG) to 7,8-didemethyl-8-hydroxy-5-deazariboflavin (FO) with the formation of dehydro coenzyme F420-0 and GMP. The protein is Phosphoenolpyruvate transferase of Thermobifida fusca (strain YX).